Reading from the N-terminus, the 92-residue chain is Phosphoribosyl-ATP pyrophosphatase (92 aa).

This sequence belongs to the PRA-PH family.

It is found in the cytoplasm. It carries out the reaction 1-(5-phospho-beta-D-ribosyl)-ATP + H2O = 1-(5-phospho-beta-D-ribosyl)-5'-AMP + diphosphate + H(+). It participates in amino-acid biosynthesis; L-histidine biosynthesis; L-histidine from 5-phospho-alpha-D-ribose 1-diphosphate: step 2/9. In Leptospira biflexa serovar Patoc (strain Patoc 1 / ATCC 23582 / Paris), this protein is Phosphoribosyl-ATP pyrophosphatase.